Here is a 309-residue protein sequence, read N- to C-terminus: Ribonuclease Z (309 aa).

7 residues coordinate Zn(2+): His-63, His-65, Asp-67, His-68, His-145, Asp-216, and His-274. The active-site Proton acceptor is Asp-67.

This sequence belongs to the RNase Z family. Homodimer. Zn(2+) is required as a cofactor.

It carries out the reaction Endonucleolytic cleavage of RNA, removing extra 3' nucleotides from tRNA precursor, generating 3' termini of tRNAs. A 3'-hydroxy group is left at the tRNA terminus and a 5'-phosphoryl group is left at the trailer molecule.. Functionally, zinc phosphodiesterase, which displays some tRNA 3'-processing endonuclease activity. Probably involved in tRNA maturation, by removing a 3'-trailer from precursor tRNA. The chain is Ribonuclease Z from Streptococcus pneumoniae serotype 2 (strain D39 / NCTC 7466).